We begin with the raw amino-acid sequence, 119 residues long: Virulence protein VsdF (119 aa).

Functionally, expressed but non-essential protein, involved in the virulence of Salmonellas. The chain is Virulence protein VsdF (vsdF) from Salmonella dublin.